The following is a 312-amino-acid chain: Olfactory receptor OR51C1 (312 aa).

Over 1 to 26 (MGSNITSTSIIFLLTGVPGLEAFHTW) the chain is Extracellular. The chain crosses the membrane as a helical span at residues 27 to 47 (ISIPFCFLSVTALLGNSLILF). Residues 48–66 (ATITQPSLHEPMYYFLSML) are Cytoplasmic-facing. A helical transmembrane segment spans residues 67–87 (SATDLGLSISTLVTMLSIFWF). The Extracellular portion of the chain corresponds to 88–99 (NVREISFNACLS). Cys97 and Cys179 form a disulfide bridge. The helical transmembrane segment at 100–120 (HMFFIKFFTVMESSVLLAMAF) threads the bilayer. The Cytoplasmic portion of the chain corresponds to 121–143 (DRFVAVSNPLRYAMILTDSRIAQ). A helical membrane pass occupies residues 144 to 164 (IGVASVIRGLLMLTPMVALLI). Topologically, residues 165 to 201 (RLSYCHSQVLHHSYCYHPDVMKLSCTDTRINSAVGLT) are extracellular. Residues 202-222 (AMFSTVGVDLLLILLSYVLII) traverse the membrane as a helical segment. At 223–240 (RTVLSVASPEERKETFST) the chain is on the cytoplasmic side. A helical membrane pass occupies residues 241–261 (CVSHIVAFAIYYIPLISLSIV). At 262–273 (HRFGKQAPAYVH) the chain is on the extracellular side. A helical membrane pass occupies residues 274–294 (TMIANTYLLISPLMNPVIYSV). Residues 295-312 (KTKQIRRAVIKILHSKET) are Cytoplasmic-facing.

It belongs to the G-protein coupled receptor 1 family.

It localises to the membrane. In terms of biological role, odorant receptor. This chain is Olfactory receptor OR51C1, found in Homo sapiens (Human).